The primary structure comprises 1193 residues: uncharacterized protein (1193 aa).

Residues 1 to 25 (MKIKFINYLLLFFIIFLNYNGFVKS) form the signal peptide. Residues 26 to 1172 (DCYQELDLVL…PQDPSDELST (1147 aa)) are Extracellular-facing. N-linked (GlcNAc...) asparagine glycosylation is found at Asn-90, Asn-183, Asn-226, Asn-265, Asn-281, Asn-345, Asn-357, Asn-436, Asn-516, Asn-552, Asn-583, Asn-627, Asn-712, Asn-765, Asn-822, Asn-938, Asn-1038, and Asn-1092. Residues 1173-1193 (SSFVQVNLLFLSILIFTIFIF) form a helical membrane-spanning segment.

The protein resides in the membrane. This is an uncharacterized protein from Dictyostelium discoideum (Social amoeba).